We begin with the raw amino-acid sequence, 591 residues long: Aspartate--tRNA(Asp/Asn) ligase (591 aa).

E174 serves as a coordination point for L-aspartate. The segment at 198-201 is aspartate; sequence QLFK. R220 is an L-aspartate binding site. ATP contacts are provided by residues 220–222 and Q229; that span reads RDE. An L-aspartate-binding site is contributed by H450. E483 serves as a coordination point for ATP. R490 is a binding site for L-aspartate. Position 535 to 538 (535 to 538) interacts with ATP; the sequence is GLDR.

It belongs to the class-II aminoacyl-tRNA synthetase family. Type 1 subfamily. As to quaternary structure, homodimer.

It is found in the cytoplasm. It carries out the reaction tRNA(Asx) + L-aspartate + ATP = L-aspartyl-tRNA(Asx) + AMP + diphosphate. Functionally, aspartyl-tRNA synthetase with relaxed tRNA specificity since it is able to aspartylate not only its cognate tRNA(Asp) but also tRNA(Asn). Reaction proceeds in two steps: L-aspartate is first activated by ATP to form Asp-AMP and then transferred to the acceptor end of tRNA(Asp/Asn). The chain is Aspartate--tRNA(Asp/Asn) ligase from Pseudomonas syringae pv. tomato (strain ATCC BAA-871 / DC3000).